Here is a 251-residue protein sequence, read N- to C-terminus: Sugar fermentation stimulation protein homolog (251 aa).

It belongs to the SfsA family.

In Prochlorococcus marinus (strain SARG / CCMP1375 / SS120), this protein is Sugar fermentation stimulation protein homolog.